Here is a 323-residue protein sequence, read N- to C-terminus: tRNA U34 carboxymethyltransferase (323 aa).

Carboxy-S-adenosyl-L-methionine contacts are provided by residues Lys-91, Trp-105, Lys-110, Gly-130, 152-154 (DPT), 181-182 (IE), Met-196, Tyr-200, and Arg-315.

The protein belongs to the class I-like SAM-binding methyltransferase superfamily. CmoB family. In terms of assembly, homotetramer.

It catalyses the reaction carboxy-S-adenosyl-L-methionine + 5-hydroxyuridine(34) in tRNA = 5-carboxymethoxyuridine(34) in tRNA + S-adenosyl-L-homocysteine + H(+). Functionally, catalyzes carboxymethyl transfer from carboxy-S-adenosyl-L-methionine (Cx-SAM) to 5-hydroxyuridine (ho5U) to form 5-carboxymethoxyuridine (cmo5U) at position 34 in tRNAs. The protein is tRNA U34 carboxymethyltransferase of Shigella flexneri.